Here is a 385-residue protein sequence, read N- to C-terminus: Lipid-A-disaccharide synthase (385 aa).

It belongs to the LpxB family.

It catalyses the reaction a lipid X + a UDP-2-N,3-O-bis[(3R)-3-hydroxyacyl]-alpha-D-glucosamine = a lipid A disaccharide + UDP + H(+). It functions in the pathway bacterial outer membrane biogenesis; LPS lipid A biosynthesis. Functionally, condensation of UDP-2,3-diacylglucosamine and 2,3-diacylglucosamine-1-phosphate to form lipid A disaccharide, a precursor of lipid A, a phosphorylated glycolipid that anchors the lipopolysaccharide to the outer membrane of the cell. This chain is Lipid-A-disaccharide synthase, found in Xylella fastidiosa (strain M12).